The following is a 280-amino-acid chain: DNA repair protein XRCC2 (280 aa).

Serine 10 bears the Phosphoserine mark.

Belongs to the RecA family. RAD51 subfamily. Interacts with RAD51D. Part of the BCDX2 complex consisting of RAD51B, RAD51C, RAD51D and XRCC2; the complex has a ring-like structure arranged into a flat disk around a central channel. In the absence of DNA, the BCDX2 subcomplex XRCC2:RAD51D formed a multimeric ring structure; in the presence of single-stranded DNA it formed a filamentous structure with the ssDNA.

It localises to the nucleus. The protein localises to the cytoplasm. Its subcellular location is the cytoskeleton. It is found in the microtubule organizing center. The protein resides in the centrosome. Its function is as follows. Involved in the homologous recombination repair (HRR) pathway of double-stranded DNA, thought to repair chromosomal fragmentation, translocations and deletions. Part of the RAD51 paralog protein complex BCDX2 which acts in the BRCA1-BRCA2-dependent HR pathway. Upon DNA damage, BCDX2 acts downstream of BRCA2 recruitment and upstream of RAD51 recruitment. BCDX2 binds predominantly to the intersection of the four duplex arms of the Holliday junction and to junction of replication forks. The BCDX2 complex was originally reported to bind single-stranded DNA, single-stranded gaps in duplex DNA and specifically to nicks in duplex DNA. This chain is DNA repair protein XRCC2 (XRCC2), found in Homo sapiens (Human).